Reading from the N-terminus, the 402-residue chain is C2H2 finger domain transcription factor CON7 (402 aa).

A disordered region spans residues 1–247 (MLASSRQPRH…GAQQHKRPRR (247 aa)). 2 stretches are compositionally biased toward polar residues: residues 19–49 (LSSSTLHRSGSPQTGTLRQDATTPTLATSVG) and 72–86 (CGDNQSEAQSVTVDT). The segment covering 87 to 98 (SSAAQYNASAQQ) has biased composition (low complexity). Composition is skewed to polar residues over residues 99-116 (EVRSNNPGNYSASATPTS) and 125-151 (ARSSSFPDHLQQRSYHPASNHSGSSGD). A C2H2-type zinc finger spans residues 256-282 (YKCGWQGCEKAYGTLNHLNAHVTMQSH). A coiled-coil region spans residues 289 to 323 (EEFKEIRKEWKARKKEEEAARKADEERQRQAAQSQ). Residues 302–317 (KKEEEAARKADEERQR) show a composition bias toward basic and acidic residues. The segment at 302–402 (KKEEEAARKA…GSNQAMYNQR (101 aa)) is disordered. Composition is skewed to polar residues over residues 322-341 (SQGGSTEGQAGSDVSQSSNG), 363-373 (AATSTSVQQQP), and 392-402 (GGSNQAMYNQR).

It localises to the nucleus. Its function is as follows. Transcription factor that plays a central role in appressorium formation and pathogenicity. Required for the expression of a large set of genes including factors that might play a role in membrane metabolism and ergosterol biosynthesis, the chitin-binding protein CBP1,as well as CHS7 that is essential for normal pathogenic development. The protein is C2H2 finger domain transcription factor CON7 of Pyricularia oryzae (strain 70-15 / ATCC MYA-4617 / FGSC 8958) (Rice blast fungus).